The primary structure comprises 405 residues: L-rhamnonate dehydratase (405 aa).

Substrate is bound by residues His33 and Arg59. Asp226, Glu252, and Glu280 together coordinate Mg(2+). His329 (proton acceptor) is an active-site residue. Position 349 (Glu349) interacts with substrate.

It belongs to the mandelate racemase/muconate lactonizing enzyme family. RhamD subfamily. Homooctamer; tetramer of dimers. Mg(2+) is required as a cofactor.

The catalysed reaction is L-rhamnonate = 2-dehydro-3-deoxy-L-rhamnonate + H2O. Catalyzes the dehydration of L-rhamnonate to 2-keto-3-deoxy-L-rhamnonate (KDR). The chain is L-rhamnonate dehydratase from Salmonella paratyphi C (strain RKS4594).